Here is a 156-residue protein sequence, read N- to C-terminus: Small ribosomal subunit protein uS7 (156 aa).

It belongs to the universal ribosomal protein uS7 family. As to quaternary structure, part of the 30S ribosomal subunit. Contacts proteins S9 and S11.

Functionally, one of the primary rRNA binding proteins, it binds directly to 16S rRNA where it nucleates assembly of the head domain of the 30S subunit. Is located at the subunit interface close to the decoding center, probably blocks exit of the E-site tRNA. The protein is Small ribosomal subunit protein uS7 of Methylobacterium radiotolerans (strain ATCC 27329 / DSM 1819 / JCM 2831 / NBRC 15690 / NCIMB 10815 / 0-1).